We begin with the raw amino-acid sequence, 295 residues long: Small ribosomal subunit protein uS2 (295 aa).

Positions 232 to 295 are disordered; the sequence is RRRGTDEKPE…DEQPAAAAAE (64 aa). A compositionally biased stretch (basic and acidic residues) spans 252–287; that stretch reads EWERELLEEPKKSDEQPAKSDELPVKTDEQPTKSDE.

This sequence belongs to the universal ribosomal protein uS2 family.

The protein is Small ribosomal subunit protein uS2 of Salinispora tropica (strain ATCC BAA-916 / DSM 44818 / JCM 13857 / NBRC 105044 / CNB-440).